We begin with the raw amino-acid sequence, 110 residues long: uncharacterized protein (110 aa).

This is an uncharacterized protein from Sulfolobus islandicus rod-shaped virus 1 (SIRV-1).